A 256-amino-acid chain; its full sequence is 5-keto-4-deoxy-D-glucarate aldolase (256 aa).

The Proton acceptor role is filled by His-50. Gln-151 contacts substrate. Residue Glu-153 coordinates Mg(2+). Residues Ser-178 and Asp-179 each coordinate substrate. Position 179 (Asp-179) interacts with Mg(2+).

It belongs to the HpcH/HpaI aldolase family. KDGluc aldolase subfamily. As to quaternary structure, homohexamer; trimer of dimers. The cofactor is Mg(2+).

It carries out the reaction 5-dehydro-4-deoxy-D-glucarate = 2-hydroxy-3-oxopropanoate + pyruvate. The catalysed reaction is 2-dehydro-3-deoxy-D-glucarate = 2-hydroxy-3-oxopropanoate + pyruvate. The protein operates within carbohydrate acid metabolism; galactarate degradation; D-glycerate from galactarate: step 2/3. In terms of biological role, catalyzes the reversible retro-aldol cleavage of both 5-keto-4-deoxy-D-glucarate and 2-keto-3-deoxy-D-glucarate to pyruvate and tartronic semialdehyde. The sequence is that of 5-keto-4-deoxy-D-glucarate aldolase from Escherichia fergusonii (strain ATCC 35469 / DSM 13698 / CCUG 18766 / IAM 14443 / JCM 21226 / LMG 7866 / NBRC 102419 / NCTC 12128 / CDC 0568-73).